The sequence spans 209 residues: MLGLIGKKVGMTQVFQGNGVVVPVTVIEFEPNYIIGKKTVERDGYDALIMGSVDLKSSKISKPIKGQYKNLENVEPKKYVIEFKGLKGYDAGDEVGLDAFKEIKYVDITGTTKGKGFQGAMKRHNFSGGPSSHGSKFHRHLGSTGQAATPSRTFKGTKMAGRMGGEQQTIQNLEVVFIDEEKRAILVKGAVPGVKGSFVIVKKAKKVGV.

Positions 127–152 are disordered; it reads SGGPSSHGSKFHRHLGSTGQAATPSR. Polar residues predominate over residues 143–152; that stretch reads STGQAATPSR.

It belongs to the universal ribosomal protein uL3 family. In terms of assembly, part of the 50S ribosomal subunit. Forms a cluster with proteins L14 and L19.

One of the primary rRNA binding proteins, it binds directly near the 3'-end of the 23S rRNA, where it nucleates assembly of the 50S subunit. This is Large ribosomal subunit protein uL3 from Borrelia hermsii (strain HS1 / DAH).